A 453-amino-acid polypeptide reads, in one-letter code: Trigger factor (453 aa).

The region spanning 171 to 256 (GDRVTISFKG…ASLIEAPQDI (86 aa)) is the PPIase FKBP-type domain.

It belongs to the FKBP-type PPIase family. Tig subfamily.

Its subcellular location is the cytoplasm. It carries out the reaction [protein]-peptidylproline (omega=180) = [protein]-peptidylproline (omega=0). In terms of biological role, involved in protein export. Acts as a chaperone by maintaining the newly synthesized protein in an open conformation. Functions as a peptidyl-prolyl cis-trans isomerase. The protein is Trigger factor of Nitrobacter hamburgensis (strain DSM 10229 / NCIMB 13809 / X14).